Reading from the N-terminus, the 347-residue chain is S-adenosylmethionine decarboxylase proenzyme 4 (347 aa).

Residues glutamate 7 and glutamate 10 contribute to the active site. Glutamate 66 is a substrate binding site. Serine 67 (schiff-base intermediate with substrate; via pyruvic acid) is an active-site residue. The residue at position 67 (serine 67) is a Pyruvic acid (Ser); by autocatalysis. The active-site Proton donor; for catalytic activity is the cysteine 81. Catalysis depends on proton acceptor; for processing activity residues serine 237 and histidine 250. Position 254 (glutamate 254) interacts with substrate.

Belongs to the eukaryotic AdoMetDC family. It depends on pyruvate as a cofactor. Post-translationally, is synthesized initially as an inactive proenzyme. Formation of the active enzyme involves a self-maturation process in which the active site pyruvoyl group is generated from an internal serine residue via an autocatalytic post-translational modification. Two non-identical subunits are generated from the proenzyme in this reaction, and the pyruvate is formed at the N-terminus of the alpha chain, which is derived from the carboxyl end of the proenzyme. The post-translation cleavage follows an unusual pathway, termed non-hydrolytic serinolysis, in which the side chain hydroxyl group of the serine supplies its oxygen atom to form the C-terminus of the beta chain, while the remainder of the serine residue undergoes an oxidative deamination to produce ammonia and the pyruvoyl group blocking the N-terminus of the alpha chain.

The enzyme catalyses S-adenosyl-L-methionine + H(+) = S-adenosyl 3-(methylsulfanyl)propylamine + CO2. It functions in the pathway amine and polyamine biosynthesis; S-adenosylmethioninamine biosynthesis; S-adenosylmethioninamine from S-adenosyl-L-methionine: step 1/1. Functionally, essential for biosynthesis of the polyamines spermidine and spermine. Essential for polyamine homeostasis, and normal plant embryogenesis, growth and development. The protein is S-adenosylmethionine decarboxylase proenzyme 4 of Arabidopsis thaliana (Mouse-ear cress).